The following is a 508-amino-acid chain: Maturase K (508 aa).

This sequence belongs to the intron maturase 2 family. MatK subfamily.

It is found in the plastid. The protein resides in the chloroplast. In terms of biological role, usually encoded in the trnK tRNA gene intron. Probably assists in splicing its own and other chloroplast group II introns. The chain is Maturase K from Wolffia arrhiza (Rootless water-meal).